Reading from the N-terminus, the 156-residue chain is Small ribosomal subunit protein uS7 (156 aa).

The protein belongs to the universal ribosomal protein uS7 family. In terms of assembly, part of the 30S ribosomal subunit. Contacts proteins S9 and S11.

Its function is as follows. One of the primary rRNA binding proteins, it binds directly to 16S rRNA where it nucleates assembly of the head domain of the 30S subunit. Is located at the subunit interface close to the decoding center, probably blocks exit of the E-site tRNA. This chain is Small ribosomal subunit protein uS7, found in Actinobacillus pleuropneumoniae serotype 5b (strain L20).